The following is a 162-amino-acid chain: Ubiquitin-fold modifier-conjugating enzyme 1 (162 aa).

Catalysis depends on Cys-115, which acts as the Glycyl thioester intermediate.

It belongs to the ubiquitin-conjugating enzyme family. UFC1 subfamily. Interacts with uba-5. Expressed in the intestine.

Functionally, E2-like enzyme which forms an intermediate with ufm-1. The intermediate is formed via a thioester linkage. This Caenorhabditis elegans protein is Ubiquitin-fold modifier-conjugating enzyme 1.